A 953-amino-acid chain; its full sequence is Nonsense-mediated mRNA decay factor SMG8 (953 aa).

Disordered stretches follow at residues 571 to 604 (AEDAELDPDEEDEELPTGEREEQHITQSNGCSQP) and 629 to 653 (PCFDQSSSSEAESTCSGTSSEESNT). A compositionally biased stretch (acidic residues) spans 573-586 (DAELDPDEEDEELP). Over residues 595–604 (ITQSNGCSQP) the composition is skewed to polar residues. The segment covering 634–653 (SSSSEAESTCSGTSSEESNT) has biased composition (low complexity).

The protein belongs to the SMG8 family.

Its function is as follows. Involved in nonsense-mediated decay (NMD) of mRNAs containing premature stop codons. Probable component of kinase complex containing nonC and recruited to stalled ribosomes. This Drosophila pseudoobscura pseudoobscura (Fruit fly) protein is Nonsense-mediated mRNA decay factor SMG8.